The following is a 31-amino-acid chain: Cytochrome b6-f complex subunit 6 (31 aa).

A helical transmembrane segment spans residues 4-26 (ITSYFGFLLAALTVTSALFIGLS).

It belongs to the PetL family. In terms of assembly, the 4 large subunits of the cytochrome b6-f complex are cytochrome b6, subunit IV (17 kDa polypeptide, PetD), cytochrome f and the Rieske protein, while the 4 small subunits are PetG, PetL, PetM and PetN. The complex functions as a dimer.

The protein localises to the plastid. The protein resides in the chloroplast thylakoid membrane. Functionally, component of the cytochrome b6-f complex, which mediates electron transfer between photosystem II (PSII) and photosystem I (PSI), cyclic electron flow around PSI, and state transitions. PetL is important for photoautotrophic growth as well as for electron transfer efficiency and stability of the cytochrome b6-f complex. This chain is Cytochrome b6-f complex subunit 6, found in Daucus carota (Wild carrot).